The chain runs to 208 residues: Putative 3-methyladenine DNA glycosylase (208 aa).

Belongs to the DNA glycosylase MPG family.

The sequence is that of Putative 3-methyladenine DNA glycosylase from Lactobacillus delbrueckii subsp. bulgaricus (strain ATCC 11842 / DSM 20081 / BCRC 10696 / JCM 1002 / NBRC 13953 / NCIMB 11778 / NCTC 12712 / WDCM 00102 / Lb 14).